Consider the following 254-residue polypeptide: PF03932 family protein CutC (254 aa).

The protein belongs to the CutC family.

It is found in the cytoplasm. The protein is PF03932 family protein CutC of Yersinia enterocolitica serotype O:8 / biotype 1B (strain NCTC 13174 / 8081).